A 368-amino-acid polypeptide reads, in one-letter code: CST complex subunit STN1 (368 aa).

An interaction with CTC1 region spans residues 1–185 (MQPGSSRCEE…KIYDQPFRSS (185 aa)). Positions 57–155 (VDVLGTVVGV…EIHATAYYKV (99 aa)) form a DNA-binding region, OB. Winged helix-turn-helix (wHTH) regions lie at residues 191–295 (EALS…YVTR) and 296–368 (EDKD…YTAF).

Belongs to the STN1 family. As to quaternary structure, component of the CST complex, composed of TEN1/C17orf106, CTC1/C17orf68 and STN1; in the complex interacts directly with TEN1 and CTC1. Interacts with ACD/TPP1, POT1 and POLA1.

The protein resides in the nucleus. The protein localises to the chromosome. It localises to the telomere. Component of the CST complex proposed to act as a specialized replication factor promoting DNA replication under conditions of replication stress or natural replication barriers such as the telomere duplex. The CST complex binds single-stranded DNA with high affinity in a sequence-independent manner, while isolated subunits bind DNA with low affinity by themselves. Initially the CST complex has been proposed to protect telomeres from DNA degradation. However, the CST complex has been shown to be involved in several aspects of telomere replication. The CST complex inhibits telomerase and is involved in telomere length homeostasis; it is proposed to bind to newly telomerase-synthesized 3' overhangs and to terminate telomerase action implicating the association with the ACD:POT1 complex thus interfering with its telomerase stimulation activity. The CST complex is also proposed to be involved in fill-in synthesis of the telomeric C-strand probably implicating recruitment and activation of DNA polymerase alpha. The CST complex facilitates recovery from many forms of exogenous DNA damage; seems to be involved in the re-initiation of DNA replication at repaired forks and/or dormant origins. Required for efficicient replication of the duplex region of the telomere. Promotes efficient replication of lagging-strand telomeres. Promotes general replication start following replication-fork stalling implicating new origin firing. May be in involved in C-strand fill-in during late S/G2 phase independent of its role in telomere duplex replication. This Macaca fascicularis (Crab-eating macaque) protein is CST complex subunit STN1.